The primary structure comprises 239 residues: Pyridoxine 5'-phosphate synthase (239 aa).

Position 7 (Asn-7) interacts with 3-amino-2-oxopropyl phosphate. 9 to 10 (DH) is a 1-deoxy-D-xylulose 5-phosphate binding site. Arg-18 provides a ligand contact to 3-amino-2-oxopropyl phosphate. Catalysis depends on His-43, which acts as the Proton acceptor. 1-deoxy-D-xylulose 5-phosphate contacts are provided by Arg-45 and His-50. The Proton acceptor role is filled by Glu-70. Thr-100 contacts 1-deoxy-D-xylulose 5-phosphate. The active-site Proton donor is His-191. 3-amino-2-oxopropyl phosphate-binding positions include Gly-192 and 213–214 (GH).

The protein belongs to the PNP synthase family. In terms of assembly, homooctamer; tetramer of dimers.

Its subcellular location is the cytoplasm. The catalysed reaction is 3-amino-2-oxopropyl phosphate + 1-deoxy-D-xylulose 5-phosphate = pyridoxine 5'-phosphate + phosphate + 2 H2O + H(+). The protein operates within cofactor biosynthesis; pyridoxine 5'-phosphate biosynthesis; pyridoxine 5'-phosphate from D-erythrose 4-phosphate: step 5/5. Functionally, catalyzes the complicated ring closure reaction between the two acyclic compounds 1-deoxy-D-xylulose-5-phosphate (DXP) and 3-amino-2-oxopropyl phosphate (1-amino-acetone-3-phosphate or AAP) to form pyridoxine 5'-phosphate (PNP) and inorganic phosphate. This chain is Pyridoxine 5'-phosphate synthase, found in Gloeobacter violaceus (strain ATCC 29082 / PCC 7421).